Consider the following 1593-residue polypeptide: ABC transporter C family member 8 (1593 aa).

The next 10 membrane-spanning stretches (helical) occupy residues 27–47 (VVMT…LYYL), 75–95 (VIVS…IVSI), 100–120 (FEIL…GLVY), 135–155 (LYWV…TLAI), 169–189 (FSYF…VLFF), 280–300 (FYIA…GPTL), 318–338 (YDGL…SLLL), 392–412 (LCPY…SLVL), 419–439 (ASVF…LAIS), and 505–525 (LLLW…VYIL). One can recognise an ABC transmembrane type-1 1 domain in the interval 280 to 561 (FYIAALFKII…LPSVVSSIIE (282 aa)). The ABC transporter 1 domain maps to 594–818 (VKIDNATLEW…GSHFTELMSH (225 aa)). An ATP-binding site is contributed by 627 to 634 (GQVGSGKS). The segment at 816 to 938 (MSHDEQQQQL…PLQKGEKSSV (123 aa)) is disordered. The stretch at 844-875 (GDNKESENNEEQNEEEEGENENLLEKVLRKSR) forms a coiled coil. Over residues 851-865 (NNEEQNEEEEGENEN) the composition is skewed to acidic residues. Residues 877-886 (RSPSPSSNRN) are compositionally biased toward low complexity. Acidic residues predominate over residues 905–922 (EEDEQDERELMEDIDIDG). Transmembrane regions (helical) follow at residues 1005–1025 (IGVL…LLSI), 1064–1084 (AKYY…ATFL), 1157–1177 (IIVI…VGAL), 1251–1271 (LAIR…LYTV), and 1280–1300 (GTAG…NWMV). One can recognise an ABC transmembrane type-1 2 domain in the interval 1010-1308 (ATCIIGFYVL…MVRMSCDLEN (299 aa)). One can recognise an ABC transporter 2 domain in the interval 1344 to 1578 (IVFKNLWLTY…QDSIYYSLVK (235 aa)). 1378 to 1385 (GRTGAGKS) contacts ATP.

Belongs to the ABC transporter superfamily. ABCC family. Conjugate transporter (TC 3.A.1.208) subfamily.

It is found in the membrane. This is ABC transporter C family member 8 (abcC8) from Dictyostelium discoideum (Social amoeba).